A 361-amino-acid polypeptide reads, in one-letter code: 3-dehydroquinate synthase (361 aa).

Residues 72 to 77, 130 to 131, K142, and K151 contribute to the NAD(+) site; these read SGEKEK and TT. Zn(2+) contacts are provided by E184, H247, and H264.

The protein belongs to the sugar phosphate cyclases superfamily. Dehydroquinate synthase family. Co(2+) serves as cofactor. Requires Zn(2+) as cofactor. NAD(+) is required as a cofactor.

It localises to the cytoplasm. The catalysed reaction is 7-phospho-2-dehydro-3-deoxy-D-arabino-heptonate = 3-dehydroquinate + phosphate. It functions in the pathway metabolic intermediate biosynthesis; chorismate biosynthesis; chorismate from D-erythrose 4-phosphate and phosphoenolpyruvate: step 2/7. In terms of biological role, catalyzes the conversion of 3-deoxy-D-arabino-heptulosonate 7-phosphate (DAHP) to dehydroquinate (DHQ). This chain is 3-dehydroquinate synthase, found in Bacillus cereus (strain ZK / E33L).